The sequence spans 181 residues: Large ribosomal subunit protein uL5 (181 aa).

It belongs to the universal ribosomal protein uL5 family. Part of the 50S ribosomal subunit; part of the 5S rRNA/L5/L18/L25 subcomplex. Contacts the 5S rRNA and the P site tRNA. Forms a bridge to the 30S subunit in the 70S ribosome.

In terms of biological role, this is one of the proteins that bind and probably mediate the attachment of the 5S RNA into the large ribosomal subunit, where it forms part of the central protuberance. In the 70S ribosome it contacts protein S13 of the 30S subunit (bridge B1b), connecting the 2 subunits; this bridge is implicated in subunit movement. Contacts the P site tRNA; the 5S rRNA and some of its associated proteins might help stabilize positioning of ribosome-bound tRNAs. This is Large ribosomal subunit protein uL5 from Helicobacter pylori (strain ATCC 700392 / 26695) (Campylobacter pylori).